We begin with the raw amino-acid sequence, 344 residues long: Anthranilate phosphoribosyltransferase (344 aa).

5-phospho-alpha-D-ribose 1-diphosphate-binding positions include G85, 88–89, T93, 95–98, 113–121, and S125; these read GD, NIST, and KHGGRSVSS. Residue G85 coordinates anthranilate. S97 lines the Mg(2+) pocket. Position 171 (R171) interacts with anthranilate. Mg(2+) is bound by residues D230 and E231.

Belongs to the anthranilate phosphoribosyltransferase family. In terms of assembly, homodimer. Mg(2+) is required as a cofactor.

It carries out the reaction N-(5-phospho-beta-D-ribosyl)anthranilate + diphosphate = 5-phospho-alpha-D-ribose 1-diphosphate + anthranilate. It functions in the pathway amino-acid biosynthesis; L-tryptophan biosynthesis; L-tryptophan from chorismate: step 2/5. Functionally, catalyzes the transfer of the phosphoribosyl group of 5-phosphorylribose-1-pyrophosphate (PRPP) to anthranilate to yield N-(5'-phosphoribosyl)-anthranilate (PRA). The protein is Anthranilate phosphoribosyltransferase of Acidovorax ebreus (strain TPSY) (Diaphorobacter sp. (strain TPSY)).